Here is a 31-residue protein sequence, read N- to C-terminus: Cyclotide cter-J (31 aa).

Residues 1 to 31 (GTVPCGESCVFIPCITGIAGCSCKNKVCYID) constitute a cross-link (cyclopeptide (Gly-Asp)). 3 disulfides stabilise this stretch: Cys-5/Cys-21, Cys-9/Cys-23, and Cys-14/Cys-28.

Post-translationally, contains 3 disulfide bonds. In terms of processing, this is a cyclic peptide.

Its function is as follows. Probably participates in a plant defense mechanism. This Clitoria ternatea (Butterfly pea) protein is Cyclotide cter-J.